The sequence spans 719 residues: Polyphosphate kinase (719 aa).

Asparagine 47 is an ATP binding site. Residues arginine 377 and arginine 407 each coordinate Mg(2+). The Phosphohistidine intermediate role is filled by histidine 437. Residues tyrosine 470, arginine 566, and histidine 594 each coordinate ATP.

It belongs to the polyphosphate kinase 1 (PPK1) family. It depends on Mg(2+) as a cofactor. An intermediate of this reaction is the autophosphorylated ppk in which a phosphate is covalently linked to a histidine residue through a N-P bond.

The enzyme catalyses [phosphate](n) + ATP = [phosphate](n+1) + ADP. Catalyzes the reversible transfer of the terminal phosphate of ATP to form a long-chain polyphosphate (polyP). The polypeptide is Polyphosphate kinase (Exiguobacterium sibiricum (strain DSM 17290 / CCUG 55495 / CIP 109462 / JCM 13490 / 255-15)).